The primary structure comprises 646 residues: Elongation factor 4 (646 aa).

The 186-residue stretch at 42–227 (AQIRNFCIIA…EVVRRVPHPQ (186 aa)) folds into the tr-type G domain. GTP contacts are provided by residues 54-59 (DHGKST) and 174-177 (NKID).

This sequence belongs to the TRAFAC class translation factor GTPase superfamily. Classic translation factor GTPase family. LepA subfamily.

It localises to the cell membrane. It catalyses the reaction GTP + H2O = GDP + phosphate + H(+). In terms of biological role, required for accurate and efficient protein synthesis under certain stress conditions. May act as a fidelity factor of the translation reaction, by catalyzing a one-codon backward translocation of tRNAs on improperly translocated ribosomes. Back-translocation proceeds from a post-translocation (POST) complex to a pre-translocation (PRE) complex, thus giving elongation factor G a second chance to translocate the tRNAs correctly. Binds to ribosomes in a GTP-dependent manner. The chain is Elongation factor 4 from Mycobacterium leprae (strain Br4923).